The following is a 484-amino-acid chain: Glutamyl-tRNA(Gln) amidotransferase subunit A (484 aa).

Active-site charge relay system residues include Lys77 and Ser152. Residue Ser176 is the Acyl-ester intermediate of the active site.

This sequence belongs to the amidase family. GatA subfamily. In terms of assembly, heterotrimer of A, B and C subunits.

It carries out the reaction L-glutamyl-tRNA(Gln) + L-glutamine + ATP + H2O = L-glutaminyl-tRNA(Gln) + L-glutamate + ADP + phosphate + H(+). In terms of biological role, allows the formation of correctly charged Gln-tRNA(Gln) through the transamidation of misacylated Glu-tRNA(Gln) in organisms which lack glutaminyl-tRNA synthetase. The reaction takes place in the presence of glutamine and ATP through an activated gamma-phospho-Glu-tRNA(Gln). The chain is Glutamyl-tRNA(Gln) amidotransferase subunit A from Lacticaseibacillus casei (strain BL23) (Lactobacillus casei).